The sequence spans 421 residues: Acetate kinase (421 aa).

Asparagine 7 lines the Mg(2+) pocket. Residue lysine 14 coordinates ATP. Arginine 91 is a substrate binding site. Aspartate 148 (proton donor/acceptor) is an active-site residue. Residues 208-212 (HIGNG) and 283-285 (DRR) each bind ATP. Glutamate 387 contacts Mg(2+).

It belongs to the acetokinase family. Homodimer. Mg(2+) serves as cofactor. It depends on Mn(2+) as a cofactor.

Its subcellular location is the cytoplasm. The enzyme catalyses acetate + ATP = acetyl phosphate + ADP. It functions in the pathway metabolic intermediate biosynthesis; acetyl-CoA biosynthesis; acetyl-CoA from acetate: step 1/2. Functionally, catalyzes the formation of acetyl phosphate from acetate and ATP. Can also catalyze the reverse reaction. This chain is Acetate kinase, found in Trichlorobacter lovleyi (strain ATCC BAA-1151 / DSM 17278 / SZ) (Geobacter lovleyi).